The sequence spans 732 residues: MSNQKKRNFQIEAFKQRVVVDPKYADKTWKILEHAIHEIYNHNASGLSFEELYRNAYNMVLHKYGDKLYTGLVTTMTFHLKEICKSIEEAQGGAFLELLNRKWNDHNKALQMIRDILMYMDRTYVSTTKKTHVHELGLHLWRDNVVYSSKIQTRLLNTLLDLVHKERTGEVIDRVLMRNVIKMFMDLGESVYQDDFEKPFLEASAEFYKVESMEFIESCDCGEYLKKAEKPLVEEVERVVNYLDAKSEAKITSVVEREMIANHVQRLVHMENSGLVNMLLNDKYEDMGRMYSLFRRVANGLVTVRDVMTLHLREMGKQLVTDPEKSKDPVEFVQRLLDERDKYDRIINMAFNNDKTFQNALNSSFEYFVNLNTRSPEFISLFVDDKLRKGLKGVGEEDVDLILDKVMMLFRYLQEKDVFEKYYKQHLAKRLLSGKTVSDDAERNLIVKLKTECGYQFTSKLEGMFTDMKTSHDTLLGFYNSHPELSEGPTLVVQVLTTGSWPTQPTIQCNLPAEVSVLCEKFRSYYLGTHTGRRLSWQTNMGTADIKAVFGKGQKHELNVSTFQMCVLMLFNNSDRLSYKEIEQATEIPTPDLKRCLQSMACVKGKNVLRKEPMSKEIAEEDWFVVNDRFASKFYKVKIGTVVAQKETEPEKQETRQRVEEDRKPQIEAAIVRIMKSRRVLDHNNIIAEVTKQLQTRFLANPTEIKKRIESLIERDFLERDNTDRKLYRYLA.

A Cullin neddylation domain is found at 662 to 724 (DRKPQIEAAI…RDFLERDNTD (63 aa)). A Glycyl lysine isopeptide (Lys-Gly) (interchain with G-Cter in NEDD8) cross-link involves residue lysine 676.

The protein belongs to the cullin family. In terms of assembly, interacts with BTB/POZ-MATH proteins BPM1 and BPM3. Post-translationally, neddylated. Deneddylated via its interaction with the COP9 signalosome (CSN) complex.

Its pathway is protein modification; protein ubiquitination. In terms of biological role, component of the cullin-RING ubiquitin ligases (CRL), or CUL3-RBX1-BTB protein E3 ligase complexes which mediate the ubiquitination and subsequent proteasomal degradation of target proteins. The functional specificity of the CRL complex depends on the BTB domain-containing protein as the substrate recognition component. Involved in embryo pattern formation and endosperm development. Required for the normal division and organization of the root stem cells and columella root cap cells. Regulates primary root growth by an unknown pathway, but in an ethylene-dependent manner. Functions in distal root patterning, by an ethylene-independent mechanism. Functionally redundant with CUL3A. The protein is Cullin-3B (CUL3B) of Arabidopsis thaliana (Mouse-ear cress).